We begin with the raw amino-acid sequence, 947 residues long: Protein translocase subunit SecA 1 (947 aa).

ATP is bound by residues Gln-83, 101–105 (GEGKT), and Asp-490. The disordered stretch occupies residues 860 to 947 (AKAQEQTGQG…KTSKPTRRRG (88 aa)). A compositionally biased stretch (basic and acidic residues) spans 925–934 (TRRERREAAR). Residues 935–947 (KQAKTSKPTRRRG) show a composition bias toward basic residues.

The protein belongs to the SecA family. As to quaternary structure, monomer and homodimer. Part of the essential Sec protein translocation apparatus which comprises SecA, SecYEG and auxiliary proteins SecDF. Other proteins may also be involved.

It is found in the cell membrane. Its subcellular location is the cytoplasm. The enzyme catalyses ATP + H2O + cellular proteinSide 1 = ADP + phosphate + cellular proteinSide 2.. Part of the Sec protein translocase complex. Interacts with the SecYEG preprotein conducting channel. Has a central role in coupling the hydrolysis of ATP to the transfer of proteins into and across the cell membrane, serving as an ATP-driven molecular motor driving the stepwise translocation of polypeptide chains across the membrane. This chain is Protein translocase subunit SecA 1, found in Mycobacterium sp. (strain JLS).